An 87-amino-acid chain; its full sequence is MANIKSAKKRAVQSEKARKHNASRRSMMRTFIKKVYAAIEAGDKAAALKAFNEMQPIVDRQAVKGLIHKNKAARHKANLTAQINKLA.

Residues 1–26 are disordered; it reads MANIKSAKKRAVQSEKARKHNASRRS.

Belongs to the bacterial ribosomal protein bS20 family.

Its function is as follows. Binds directly to 16S ribosomal RNA. This is Small ribosomal subunit protein bS20 from Salmonella gallinarum (strain 287/91 / NCTC 13346).